Reading from the N-terminus, the 284-residue chain is Nucleotide-binding protein Sbal195_0713 (284 aa).

8-15 serves as a coordination point for ATP; that stretch reads GRSGSGKS. 56-59 serves as a coordination point for GTP; the sequence is DVRN.

The protein belongs to the RapZ-like family.

Displays ATPase and GTPase activities. The polypeptide is Nucleotide-binding protein Sbal195_0713 (Shewanella baltica (strain OS195)).